Reading from the N-terminus, the 900-residue chain is Chaperone protein ClpB 2 (900 aa).

The Clp R domain occupies 15 to 154 (PDRFSDPAWE…ESLLRQPSVS (140 aa)). Repeat regions lie at residues 18 to 81 (FSDP…LADQ) and 91 to 154 (IGED…PSVS). A disordered region spans residues 151–183 (PSVSPAPAPPPVPTAASAPAPTPRSAPAPRVMA). Over residues 154–163 (SPAPAPPPVP) the composition is skewed to pro residues. The NBD1 stretch occupies residues 191 to 376 (ELEREPSALE…RRFQQVLIRE (186 aa)). An ATP-binding site is contributed by 244 to 251 (GEPGVGKT). Positions 377 to 581 (PDLELSLEIL…IADLVARWTG (205 aa)) are linker. Positions 427–557 (IDLIDEAAAQ…LEASQAEAQS (131 aa)) form a coiled coil. The tract at residues 591-803 (ERRKLLALES…RIDEVIRFRP (213 aa)) is NBD2. Residue 641–648 (GPTGVGKT) participates in ATP binding. A C-terminal region spans residues 804–900 (LKVKDLVRIV…GASLEFEPLE (97 aa)).

The protein belongs to the ClpA/ClpB family. As to quaternary structure, homohexamer. The oligomerization is ATP-dependent.

It is found in the cytoplasm. Its function is as follows. Part of a stress-induced multi-chaperone system, it is involved in the recovery of the cell from heat-induced damage, in cooperation with DnaK, DnaJ and GrpE. Acts before DnaK, in the processing of protein aggregates. Protein binding stimulates the ATPase activity; ATP hydrolysis unfolds the denatured protein aggregates, which probably helps expose new hydrophobic binding sites on the surface of ClpB-bound aggregates, contributing to the solubilization and refolding of denatured protein aggregates by DnaK. The polypeptide is Chaperone protein ClpB 2 (clpB2) (Parasynechococcus marenigrum (strain WH8102)).